A 355-amino-acid chain; its full sequence is Putative inositol monophosphatase 3 (355 aa).

A helical transmembrane segment spans residues 16 to 36 (LPATIVAILLTFVLVYFLNFH). 5 residues coordinate Mg(2+): Glu127, Asp167, Leu169, Asp170, and Asp292. A substrate-binding site is contributed by Glu127. Residues 169–172 (LDAT) and Asp292 each bind substrate.

It belongs to the inositol monophosphatase superfamily. Requires Mg(2+) as cofactor.

The protein resides in the membrane. It catalyses the reaction a myo-inositol phosphate + H2O = myo-inositol + phosphate. Its pathway is polyol metabolism; myo-inositol biosynthesis; myo-inositol from D-glucose 6-phosphate: step 2/2. This chain is Putative inositol monophosphatase 3, found in Drosophila melanogaster (Fruit fly).